Consider the following 165-residue polypeptide: 6,7-dimethyl-8-ribityllumazine synthase (165 aa).

Residues Y30, 61 to 63 (ALE), and 90 to 92 (VVI) contribute to the 5-amino-6-(D-ribitylamino)uracil site. 95–96 (ET) lines the (2S)-2-hydroxy-3-oxobutyl phosphate pocket. The active-site Proton donor is the H98. N123 contributes to the 5-amino-6-(D-ribitylamino)uracil binding site. Position 137 (R137) interacts with (2S)-2-hydroxy-3-oxobutyl phosphate.

It belongs to the DMRL synthase family.

The enzyme catalyses (2S)-2-hydroxy-3-oxobutyl phosphate + 5-amino-6-(D-ribitylamino)uracil = 6,7-dimethyl-8-(1-D-ribityl)lumazine + phosphate + 2 H2O + H(+). Its pathway is cofactor biosynthesis; riboflavin biosynthesis; riboflavin from 2-hydroxy-3-oxobutyl phosphate and 5-amino-6-(D-ribitylamino)uracil: step 1/2. Functionally, catalyzes the formation of 6,7-dimethyl-8-ribityllumazine by condensation of 5-amino-6-(D-ribitylamino)uracil with 3,4-dihydroxy-2-butanone 4-phosphate. This is the penultimate step in the biosynthesis of riboflavin. This is 6,7-dimethyl-8-ribityllumazine synthase from Xanthobacter autotrophicus (strain ATCC BAA-1158 / Py2).